A 269-amino-acid polypeptide reads, in one-letter code: Hydroxyethylthiazole kinase (269 aa).

M41 lines the substrate pocket. ATP is bound by residues R117 and S165. G192 contributes to the substrate binding site.

Belongs to the Thz kinase family. Mg(2+) is required as a cofactor.

The enzyme catalyses 5-(2-hydroxyethyl)-4-methylthiazole + ATP = 4-methyl-5-(2-phosphooxyethyl)-thiazole + ADP + H(+). The protein operates within cofactor biosynthesis; thiamine diphosphate biosynthesis; 4-methyl-5-(2-phosphoethyl)-thiazole from 5-(2-hydroxyethyl)-4-methylthiazole: step 1/1. Catalyzes the phosphorylation of the hydroxyl group of 4-methyl-5-beta-hydroxyethylthiazole (THZ). This chain is Hydroxyethylthiazole kinase, found in Actinobacillus succinogenes (strain ATCC 55618 / DSM 22257 / CCUG 43843 / 130Z).